Consider the following 117-residue polypeptide: Large ribosomal subunit protein bL20 (117 aa).

The protein belongs to the bacterial ribosomal protein bL20 family.

Its function is as follows. Binds directly to 23S ribosomal RNA and is necessary for the in vitro assembly process of the 50S ribosomal subunit. It is not involved in the protein synthesizing functions of that subunit. This is Large ribosomal subunit protein bL20 from Rickettsia felis (strain ATCC VR-1525 / URRWXCal2) (Rickettsia azadi).